We begin with the raw amino-acid sequence, 498 residues long: Glycerol kinase (498 aa).

ADP is bound at residue T12. Residues T12, T13, and S14 each contribute to the ATP site. T12 serves as a coordination point for sn-glycerol 3-phosphate. R16 lines the ADP pocket. Sn-glycerol 3-phosphate-binding residues include R82, E83, and Y134. Glycerol-binding residues include R82, E83, and Y134. H230 bears the Phosphohistidine; by HPr mark. D244 is a sn-glycerol 3-phosphate binding site. 2 residues coordinate glycerol: D244 and Q245. ADP-binding residues include T266 and G309. ATP contacts are provided by T266, G309, Q313, and G410. Residues G410 and N414 each contribute to the ADP site.

This sequence belongs to the FGGY kinase family. Homotetramer and homodimer (in equilibrium). The phosphoenolpyruvate-dependent sugar phosphotransferase system (PTS), including enzyme I, and histidine-containing protein (HPr) are required for the phosphorylation, which leads to the activation of the enzyme.

The enzyme catalyses glycerol + ATP = sn-glycerol 3-phosphate + ADP + H(+). It functions in the pathway polyol metabolism; glycerol degradation via glycerol kinase pathway; sn-glycerol 3-phosphate from glycerol: step 1/1. Activated by phosphorylation and inhibited by fructose 1,6-bisphosphate (FBP). Functionally, key enzyme in the regulation of glycerol uptake and metabolism. Catalyzes the phosphorylation of glycerol to yield sn-glycerol 3-phosphate. In Staphylococcus aureus (strain bovine RF122 / ET3-1), this protein is Glycerol kinase.